Consider the following 448-residue polypeptide: Methylenetetrahydrofolate--tRNA-(uracil-5-)-methyltransferase TrmFO (448 aa).

FAD is bound at residue 13 to 18 (GAGLAG).

It belongs to the MnmG family. TrmFO subfamily. FAD is required as a cofactor.

It localises to the cytoplasm. It catalyses the reaction uridine(54) in tRNA + (6R)-5,10-methylene-5,6,7,8-tetrahydrofolate + NADH + H(+) = 5-methyluridine(54) in tRNA + (6S)-5,6,7,8-tetrahydrofolate + NAD(+). The enzyme catalyses uridine(54) in tRNA + (6R)-5,10-methylene-5,6,7,8-tetrahydrofolate + NADPH + H(+) = 5-methyluridine(54) in tRNA + (6S)-5,6,7,8-tetrahydrofolate + NADP(+). Functionally, catalyzes the folate-dependent formation of 5-methyl-uridine at position 54 (M-5-U54) in all tRNAs. This is Methylenetetrahydrofolate--tRNA-(uracil-5-)-methyltransferase TrmFO from Streptococcus pyogenes serotype M18 (strain MGAS8232).